A 228-amino-acid chain; its full sequence is 2,3-bisphosphoglycerate-dependent phosphoglycerate mutase (228 aa).

Substrate is bound by residues 8 to 15 (RHGQSVWN), 21 to 22 (TG), Arg-60, 87 to 90 (ERHY), Lys-98, 114 to 115 (RR), and 183 to 184 (GN). The active-site Tele-phosphohistidine intermediate is His-9. Catalysis depends on Glu-87, which acts as the Proton donor/acceptor.

The protein belongs to the phosphoglycerate mutase family. BPG-dependent PGAM subfamily.

The enzyme catalyses (2R)-2-phosphoglycerate = (2R)-3-phosphoglycerate. The protein operates within carbohydrate degradation; glycolysis; pyruvate from D-glyceraldehyde 3-phosphate: step 3/5. Functionally, catalyzes the interconversion of 2-phosphoglycerate and 3-phosphoglycerate. This is 2,3-bisphosphoglycerate-dependent phosphoglycerate mutase from Staphylococcus saprophyticus subsp. saprophyticus (strain ATCC 15305 / DSM 20229 / NCIMB 8711 / NCTC 7292 / S-41).